The following is a 576-amino-acid chain: Tudor and KH domain-containing protein homolog (576 aa).

Residues 40–60 are disordered; sequence EEADSGGQRPASGIRGQTEEQ. KH domains are found at residues 65 to 127 and 136 to 199; these read EVCL…RALL and VVKV…RKML. A compositionally biased stretch (basic and acidic residues) spans 209-224; the sequence is LVRSMEEVEQRREPRR. The tract at residues 209 to 253 is disordered; the sequence is LVRSMEEVEQRREPRRSPTNSIASSMYSSQTSLSSHTQPRDKLMA. The segment covering 232 to 243 has biased composition (low complexity); it reads SSMYSSQTSLSS. In terms of domain architecture, Tudor spans 310 to 375; the sequence is APYVGQIVAA…CELRTDFLTL (66 aa). The tract at residues 556 to 576 is disordered; the sequence is ATDLENGNNNNASTTNGASAH. The segment covering 561–576 has biased composition (low complexity); it reads NGNNNNASTTNGASAH.

This sequence belongs to the Tdrkh family. As to quaternary structure, interacts (via C-terminus) with AGO3 (via the N-terminal region when symmetrically methylated on arginine residues); this interaction is RNA-independent and may be required for AGO3 localization to the nuage. Interacts (via Tudor domain) with piwi (via N-terminus). Interacts with tral and me31B. As to expression, ovaries (at protein level). Expressed in the ovary and testis.

It is found in the cytoplasm. Its subcellular location is the nucleus. The protein resides in the cytoplasmic ribonucleoprotein granule. Involved in the piwi-interacting RNA (piRNA) metabolic process, which mediates the repression of transposable elements during meiosis by forming complexes composed of piRNAs and Piwi proteins, and governs the methylation and subsequent repression of transposons which is essential for germline integrity. Likely to act by recruiting Piwi proteins such as AGO3 and piwi to the piRNA biogenesis machinery in the nuage. Required for the final steps of primary piRNA biogenesis by participating in the 3' end-trimming of piwi-bound intermediates into mature piRNAs. The sequence is that of Tudor and KH domain-containing protein homolog from Drosophila melanogaster (Fruit fly).